An 85-amino-acid polypeptide reads, in one-letter code: UPF0291 protein SP_1473 (85 aa).

The tract at residues Thr62–Ser85 is disordered.

The protein belongs to the UPF0291 family.

The protein localises to the cytoplasm. This chain is UPF0291 protein SP_1473, found in Streptococcus pneumoniae serotype 4 (strain ATCC BAA-334 / TIGR4).